Reading from the N-terminus, the 253-residue chain is Triosephosphate isomerase (253 aa).

8 to 10 (NWK) serves as a coordination point for substrate. Histidine 93 acts as the Electrophile in catalysis. Glutamate 165 acts as the Proton acceptor in catalysis. Substrate-binding positions include glycine 171, serine 210, and 231–232 (GG).

Belongs to the triosephosphate isomerase family. Homodimer.

The protein localises to the cytoplasm. It carries out the reaction D-glyceraldehyde 3-phosphate = dihydroxyacetone phosphate. The protein operates within carbohydrate biosynthesis; gluconeogenesis. It participates in carbohydrate degradation; glycolysis; D-glyceraldehyde 3-phosphate from glycerone phosphate: step 1/1. In terms of biological role, involved in the gluconeogenesis. Catalyzes stereospecifically the conversion of dihydroxyacetone phosphate (DHAP) to D-glyceraldehyde-3-phosphate (G3P). This Francisella tularensis subsp. tularensis (strain FSC 198) protein is Triosephosphate isomerase.